A 467-amino-acid chain; its full sequence is Cysteine--tRNA ligase (467 aa).

C28 provides a ligand contact to Zn(2+). The 'HIGH' region signature appears at 30–40; it reads ITAYDYSHIGH. 3 residues coordinate Zn(2+): C211, H236, and E240. Residues 268–272 carry the 'KMSKS' region motif; sequence KMSKS. Residue K271 coordinates ATP.

This sequence belongs to the class-I aminoacyl-tRNA synthetase family. Requires Zn(2+) as cofactor.

It is found in the cytoplasm. It catalyses the reaction tRNA(Cys) + L-cysteine + ATP = L-cysteinyl-tRNA(Cys) + AMP + diphosphate. In Archaeoglobus fulgidus (strain ATCC 49558 / DSM 4304 / JCM 9628 / NBRC 100126 / VC-16), this protein is Cysteine--tRNA ligase (cysS).